We begin with the raw amino-acid sequence, 388 residues long: Dual-specificity RNA methyltransferase RlmN (388 aa).

Glu-109 functions as the Proton acceptor in the catalytic mechanism. The region spanning 115-354 is the Radical SAM core domain; it reads EDDRATLCVS…TIVRKTRGDD (240 aa). An intrachain disulfide couples Cys-122 to Cys-359. 3 residues coordinate [4Fe-4S] cluster: Cys-129, Cys-133, and Cys-136. S-adenosyl-L-methionine contacts are provided by residues 183 to 184, Ser-215, 237 to 239, and Asn-316; these read GE and SLH. The active-site S-methylcysteine intermediate is Cys-359.

This sequence belongs to the radical SAM superfamily. RlmN family. [4Fe-4S] cluster serves as cofactor.

It localises to the cytoplasm. It carries out the reaction adenosine(2503) in 23S rRNA + 2 reduced [2Fe-2S]-[ferredoxin] + 2 S-adenosyl-L-methionine = 2-methyladenosine(2503) in 23S rRNA + 5'-deoxyadenosine + L-methionine + 2 oxidized [2Fe-2S]-[ferredoxin] + S-adenosyl-L-homocysteine. It catalyses the reaction adenosine(37) in tRNA + 2 reduced [2Fe-2S]-[ferredoxin] + 2 S-adenosyl-L-methionine = 2-methyladenosine(37) in tRNA + 5'-deoxyadenosine + L-methionine + 2 oxidized [2Fe-2S]-[ferredoxin] + S-adenosyl-L-homocysteine. In terms of biological role, specifically methylates position 2 of adenine 2503 in 23S rRNA and position 2 of adenine 37 in tRNAs. m2A2503 modification seems to play a crucial role in the proofreading step occurring at the peptidyl transferase center and thus would serve to optimize ribosomal fidelity. The protein is Dual-specificity RNA methyltransferase RlmN of Citrobacter koseri (strain ATCC BAA-895 / CDC 4225-83 / SGSC4696).